Here is a 571-residue protein sequence, read N- to C-terminus: Proline--tRNA ligase (571 aa).

Belongs to the class-II aminoacyl-tRNA synthetase family. ProS type 1 subfamily. Homodimer.

It is found in the cytoplasm. It catalyses the reaction tRNA(Pro) + L-proline + ATP = L-prolyl-tRNA(Pro) + AMP + diphosphate. Its function is as follows. Catalyzes the attachment of proline to tRNA(Pro) in a two-step reaction: proline is first activated by ATP to form Pro-AMP and then transferred to the acceptor end of tRNA(Pro). As ProRS can inadvertently accommodate and process non-cognate amino acids such as alanine and cysteine, to avoid such errors it has two additional distinct editing activities against alanine. One activity is designated as 'pretransfer' editing and involves the tRNA(Pro)-independent hydrolysis of activated Ala-AMP. The other activity is designated 'posttransfer' editing and involves deacylation of mischarged Ala-tRNA(Pro). The misacylated Cys-tRNA(Pro) is not edited by ProRS. This Psychromonas ingrahamii (strain DSM 17664 / CCUG 51855 / 37) protein is Proline--tRNA ligase.